The chain runs to 289 residues: 4-hydroxy-tetrahydrodipicolinate synthase (289 aa).

Thr43 is a pyruvate binding site. Tyr131 functions as the Proton donor/acceptor in the catalytic mechanism. Lys160 acts as the Schiff-base intermediate with substrate in catalysis. Ile200 provides a ligand contact to pyruvate.

The protein belongs to the DapA family. In terms of assembly, homotetramer; dimer of dimers.

It is found in the cytoplasm. It carries out the reaction L-aspartate 4-semialdehyde + pyruvate = (2S,4S)-4-hydroxy-2,3,4,5-tetrahydrodipicolinate + H2O + H(+). It participates in amino-acid biosynthesis; L-lysine biosynthesis via DAP pathway; (S)-tetrahydrodipicolinate from L-aspartate: step 3/4. Catalyzes the condensation of (S)-aspartate-beta-semialdehyde [(S)-ASA] and pyruvate to 4-hydroxy-tetrahydrodipicolinate (HTPA). The protein is 4-hydroxy-tetrahydrodipicolinate synthase of Methanococcus vannielii (strain ATCC 35089 / DSM 1224 / JCM 13029 / OCM 148 / SB).